A 697-amino-acid chain; its full sequence is Protein FAM13A (697 aa).

Disordered regions lie at residues 1 to 21, 52 to 112, and 133 to 229; these read MACE…MSPF, HLFD…GFSN, and YIGE…QQES. The residue at position 19 (S19) is a Phosphoserine. A compositionally biased stretch (low complexity) spans 58–78; sequence SSGGQSSEDSESGASSSSSTS. The span at 86 to 103 shows a compositional bias: basic and acidic residues; that stretch reads AKEQDESRHSRDVGRLNK. The span at 146–169 shows a compositional bias: polar residues; the sequence is SSRLSELNENQDGLVNMENLNPTP. Positions 170-197 are enriched in basic and acidic residues; it reads SHERTGSDHVELISDGSKENEKDGRQSQ. S271 and S291 each carry phosphoserine. Disordered regions lie at residues 307 to 338 and 398 to 433; these read TEMP…EDLT and LKIS…KKQE. The segment covering 398–407 has biased composition (basic and acidic residues); it reads LKISEEDLPP. S401 is modified (phosphoserine). The segment covering 412-422 has biased composition (polar residues); that stretch reads RSNTLPKSFGS. Positions 424–433 are enriched in basic and acidic residues; the sequence is LEKEDEKKQE.

This sequence belongs to the FAM13 family.

In Bos taurus (Bovine), this protein is Protein FAM13A (FAM13A).